A 581-amino-acid polypeptide reads, in one-letter code: DNA primase (581 aa).

Residues 40–64 (CPFHNEKTPSFTVNGEKQFYHCFGC) form a CHC2-type zinc finger. The Toprim domain maps to 259-341 (NRLLVVEGYM…GRQLRFMFLP (83 aa)). The Mg(2+) site is built by E265, D309, and D311.

The protein belongs to the DnaG primase family. Monomer. Interacts with DnaB. Zn(2+) is required as a cofactor. Requires Mg(2+) as cofactor.

It catalyses the reaction ssDNA + n NTP = ssDNA/pppN(pN)n-1 hybrid + (n-1) diphosphate.. Its function is as follows. RNA polymerase that catalyzes the synthesis of short RNA molecules used as primers for DNA polymerase during DNA replication. This is DNA primase from Shigella flexneri.